The primary structure comprises 753 residues: MTIHNHTLGFPRVGLRRELKKAQESYWAGKSTREELLAVGRELRARHWEQQKAAGIDLLPVGDFAWYDHVLTTSLLLGNVPARHQNADGTVDIDTLFRIGRGRAPTGEPAAAAEMTKWFNTNYHYMVPEFTKGQQFSLTWTQLLDEVDEALALGHHVKPVLLGPVTYLWLGKVKGEQFDRLSLLNDILPVYQQVIAELAKRGIQWVQIDEPALVLELPQAWLDAFKPAYEALKGQTKLLLTTYFEGVSDNLDTITALPVQGLHVDLVHGHDDVNELHRRLPQEWLLSAGVINGRNVWRADLTEKYAQLKAIAGQRELWVGSSCSLLHSPIDLSVETRLDAEVKSWFAFALQKCEELALLRDALNSGDTTKIEQWSAPIQARKHSARVHNPAVEQRLKAITPQDSQRAHAYPVRAEAQRARFNLPAWPTTTIGSFPQTTEIRGLRLDFKKGNLDAANYRTGIAEHIKQAIAEQERLGLDVLVHGEAERNDMVEYFGEHLDGFVFTQNGWVQSYGSRCVKPPVVIGDISRPAPITVEWAKYAQSLTDKPVKGMLTGPVTILCWSFPREDVSRETIAKQIALALRDEVADLEAAGIGIIQIDEPALREGLPLKRSDWDAYLAWGVEAFRLNAAVAKDDTQIHTHMCYCEFNDIMDSIAALDADVITIETSRSDMELLESFEEFEYPNEIGPGVYDIHSPNVPDVAWIEALLKKAAQRIPQERLWVNPDCGLKTRGWPETRAALANMVKAAQNLRQA.

5-methyltetrahydropteroyltri-L-glutamate-binding positions include 17-20 (RELK) and K117. Residues 431-433 (IGS) and E484 each bind L-homocysteine. Residues 431–433 (IGS) and E484 contribute to the L-methionine site. Residues 515–516 (RC) and W561 each bind 5-methyltetrahydropteroyltri-L-glutamate. An L-homocysteine-binding site is contributed by D599. Residue D599 participates in L-methionine binding. E605 contributes to the 5-methyltetrahydropteroyltri-L-glutamate binding site. Residues H641, C643, and E665 each coordinate Zn(2+). Residue H694 is the Proton donor of the active site. C726 contributes to the Zn(2+) binding site.

It belongs to the vitamin-B12 independent methionine synthase family. Requires Zn(2+) as cofactor.

It catalyses the reaction 5-methyltetrahydropteroyltri-L-glutamate + L-homocysteine = tetrahydropteroyltri-L-glutamate + L-methionine. The protein operates within amino-acid biosynthesis; L-methionine biosynthesis via de novo pathway; L-methionine from L-homocysteine (MetE route): step 1/1. Catalyzes the transfer of a methyl group from 5-methyltetrahydrofolate to homocysteine resulting in methionine formation. The protein is 5-methyltetrahydropteroyltriglutamate--homocysteine methyltransferase of Cronobacter sakazakii (strain ATCC BAA-894) (Enterobacter sakazakii).